A 218-amino-acid polypeptide reads, in one-letter code: Adenylate kinase (218 aa).

10-15 lines the ATP pocket; it reads GAGKGT. Positions 30-59 are NMP; that stretch reads STGDMLRAAVKQGTPLGQEAKKVMDAGGLV. Residues Thr31, Arg36, 57 to 59, 85 to 88, and Gln92 each bind AMP; these read GLV and GFPR. The tract at residues 122–159 is LID; the sequence is GRRVHPASGRSYHVRFNPPKQEGLDDVTGEPLVQRDDD. ATP contacts are provided by residues Arg123 and 132–133; that span reads SY. Positions 156 and 167 each coordinate AMP. Gly203 contributes to the ATP binding site.

It belongs to the adenylate kinase family. In terms of assembly, monomer.

The protein localises to the cytoplasm. It catalyses the reaction AMP + ATP = 2 ADP. It participates in purine metabolism; AMP biosynthesis via salvage pathway; AMP from ADP: step 1/1. In terms of biological role, catalyzes the reversible transfer of the terminal phosphate group between ATP and AMP. Plays an important role in cellular energy homeostasis and in adenine nucleotide metabolism. This is Adenylate kinase from Bordetella petrii (strain ATCC BAA-461 / DSM 12804 / CCUG 43448).